Here is a 258-residue protein sequence, read N- to C-terminus: Hydroxyacylglutathione hydrolase (258 aa).

Zn(2+)-binding residues include H56, H58, D60, H61, H112, D132, and H170.

The protein belongs to the metallo-beta-lactamase superfamily. Glyoxalase II family. As to quaternary structure, monomer. Zn(2+) is required as a cofactor.

It carries out the reaction an S-(2-hydroxyacyl)glutathione + H2O = a 2-hydroxy carboxylate + glutathione + H(+). The protein operates within secondary metabolite metabolism; methylglyoxal degradation; (R)-lactate from methylglyoxal: step 2/2. Its function is as follows. Thiolesterase that catalyzes the hydrolysis of S-D-lactoyl-glutathione to form glutathione and D-lactic acid. The sequence is that of Hydroxyacylglutathione hydrolase from Pseudomonas paraeruginosa (strain DSM 24068 / PA7) (Pseudomonas aeruginosa (strain PA7)).